Consider the following 663-residue polypeptide: Cytoplasmic dynein 1 intermediate chain (663 aa).

Positions 17–37 (LREEKDRRRREKEIKDMEEAA) are enriched in basic and acidic residues. Disordered regions lie at residues 17-52 (LREEKDRRRREKEIKDMEEAAGRIGGGAGIDKDQRK) and 75-107 (SVNSMTSDNSNTQTPDASLQATVNGQSGGKKQP). The segment covering 75–85 (SVNSMTSDNSN) has biased composition (low complexity). A compositionally biased stretch (polar residues) spans 86–99 (TQTPDASLQATVNG). WD repeat units lie at residues 311 to 360 (SKNR…STPE), 364 to 404 (HCQS…RTPI), 413 to 454 (AHTH…QPQD), 463 to 503 (SKAI…SGVN), 508 to 553 (RHLG…PLYS), 556 to 596 (DNSD…EVPT), and 602 to 641 (AGAPALNRVSWTPSGLHVCIGDEAGKLYVYDVAENLAQPS).

This sequence belongs to the dynein intermediate chain family. Homodimer. The cytoplasmic dynein 1 complex consists of two catalytic heavy chains (HCs) and a number of non-catalytic subunits presented by intermediate chains (ICs), light intermediate chains (LICs) and light chains (LCs). High levels of isoform 1b, isoform 1c, isoform 3a and isoform 4 accumulate in early egg chambers and at stage 9 become concentrated at the posterior of the oocyte. Isoform 5a and isoform 5b are highly expressed in adult head and to a lesser extent in adult torso. Isoform 1a, isoform 2a and isoform 2b are found in all tissues examined, including ovaries, midgut, torso and head.

Its subcellular location is the cytoplasm. It is found in the cytoskeleton. It localises to the lysosome membrane. The protein localises to the nucleus membrane. Acts as one of several non-catalytic accessory components of the cytoplasmic dynein 1 complex that are thought to be involved in linking dynein to cargos and to adapter proteins that regulate dynein function. Cytoplasmic dynein 1 acts as a motor for the intracellular retrograde motility of vesicles and organelles along microtubules. The intermediate chains mediate the help dynein bind to dynactin 150 kDa component. The polypeptide is Cytoplasmic dynein 1 intermediate chain (sw) (Drosophila melanogaster (Fruit fly)).